The sequence spans 200 residues: Holliday junction branch migration complex subunit RuvA (200 aa).

The domain I stretch occupies residues 1–63; sequence MIASVRGVVT…EDSLTLYGFA (63 aa). Residues 64 to 142 are domain II; that stretch reads DDDAKALFEL…PVPVGADSAA (79 aa). The interval 143–151 is flexible linker; sequence GVTTGAWPE. Positions 151 to 200 are domain III; sequence EQVRQALVGLGWTAAQADQAVTAVAETVDGAVPPVPVLLRQAIRLLGRTR.

The protein belongs to the RuvA family. In terms of assembly, homotetramer. Forms an RuvA(8)-RuvB(12)-Holliday junction (HJ) complex. HJ DNA is sandwiched between 2 RuvA tetramers; dsDNA enters through RuvA and exits via RuvB. An RuvB hexamer assembles on each DNA strand where it exits the tetramer. Each RuvB hexamer is contacted by two RuvA subunits (via domain III) on 2 adjacent RuvB subunits; this complex drives branch migration. In the full resolvosome a probable DNA-RuvA(4)-RuvB(12)-RuvC(2) complex forms which resolves the HJ.

It is found in the cytoplasm. Its function is as follows. The RuvA-RuvB-RuvC complex processes Holliday junction (HJ) DNA during genetic recombination and DNA repair, while the RuvA-RuvB complex plays an important role in the rescue of blocked DNA replication forks via replication fork reversal (RFR). RuvA specifically binds to HJ cruciform DNA, conferring on it an open structure. The RuvB hexamer acts as an ATP-dependent pump, pulling dsDNA into and through the RuvAB complex. HJ branch migration allows RuvC to scan DNA until it finds its consensus sequence, where it cleaves and resolves the cruciform DNA. This chain is Holliday junction branch migration complex subunit RuvA, found in Salinispora tropica (strain ATCC BAA-916 / DSM 44818 / JCM 13857 / NBRC 105044 / CNB-440).